A 395-amino-acid chain; its full sequence is 1-deoxy-D-xylulose 5-phosphate reductoisomerase (395 aa).

Positions 10, 11, 12, 13, 37, 38, and 124 each coordinate NADPH. Position 125 (Lys-125) interacts with 1-deoxy-D-xylulose 5-phosphate. Glu-126 serves as a coordination point for NADPH. Asp-150 provides a ligand contact to Mn(2+). Residues Ser-151, Glu-152, Ser-179, and His-202 each contribute to the 1-deoxy-D-xylulose 5-phosphate site. Glu-152 serves as a coordination point for Mn(2+). Gly-208 contacts NADPH. Residues Ser-215, Asn-220, Lys-221, and Glu-224 each contribute to the 1-deoxy-D-xylulose 5-phosphate site. Glu-224 is a Mn(2+) binding site.

Belongs to the DXR family. Requires Mg(2+) as cofactor. The cofactor is Mn(2+).

The enzyme catalyses 2-C-methyl-D-erythritol 4-phosphate + NADP(+) = 1-deoxy-D-xylulose 5-phosphate + NADPH + H(+). Its pathway is isoprenoid biosynthesis; isopentenyl diphosphate biosynthesis via DXP pathway; isopentenyl diphosphate from 1-deoxy-D-xylulose 5-phosphate: step 1/6. Functionally, catalyzes the NADPH-dependent rearrangement and reduction of 1-deoxy-D-xylulose-5-phosphate (DXP) to 2-C-methyl-D-erythritol 4-phosphate (MEP). The protein is 1-deoxy-D-xylulose 5-phosphate reductoisomerase of Cupriavidus pinatubonensis (strain JMP 134 / LMG 1197) (Cupriavidus necator (strain JMP 134)).